Reading from the N-terminus, the 512-residue chain is Cytochrome P450 monooxygenase ABA1 (512 aa).

Residues 13 to 32 (HWLSGILAIATVYLATSYII) traverse the membrane as a helical segment. Residue Cys-458 participates in heme binding.

This sequence belongs to the cytochrome P450 family. Heme serves as cofactor.

It localises to the membrane. The protein operates within hormone biosynthesis. Cytochrome P450 monooxygenase involved in the biosynthesis of abscisic acid (ABA), a phytohormone that acts antagonistically toward salicylic acid (SA), jasmonic acid (JA) and ethylene (ETH) signaling, to impede plant defense responses. During pathogen-host interaction, ABA plays a dual role in disease severity by increasing plant susceptibility and accelerating pathogenesis in the fungus itself. The first step of the pathway catalyzes the reaction from farnesyl diphosphate to alpha-ionylideneethane performed by the alpha-ionylideneethane synthase ABA3 via a three-step reaction mechanism involving 2 neutral intermediates, beta-farnesene and allofarnesene. The cytochrome P450 monooxygenase ABA1 might then be involved in the conversion of alpha-ionylideneethane to alpha-ionylideneacetic acid. Alpha-ionylideneacetic acid is further converted to abscisic acid in 2 steps involving the cytochrome P450 monooxygenase ABA2 and the short-chain dehydrogenase/reductase ABA4, via the intermediates 1'-deoxy-ABA or 1',4'-trans-diol-ABA, depending on the order of action of these 2 enzymes. ABA2 is responsible for the hydroxylation of carbon atom C-1' and ABA4 might be involved in the oxidation of the C-4' carbon atom. This is Cytochrome P450 monooxygenase ABA1 from Pyricularia oryzae (strain Y34) (Rice blast fungus).